The chain runs to 220 residues: GTP-binding protein YPT53 (220 aa).

GTP is bound by residues 19 to 26 (GESAVGKS), 67 to 71 (DTAGQ), and 125 to 128 (NKMD). S-geranylgeranyl cysteine attachment occurs at residues Cys218 and Cys220. Cysteine methyl ester is present on Cys220.

It belongs to the small GTPase superfamily. Rab family.

Its subcellular location is the cell membrane. Its function is as follows. Required for transport in the endocytic pathway and for correct sorting of the vacuolar hydrolases suggesting a possible intersection of the endocytic with the vacuolar sorting pathway. May be involved in recruiting the MON1-CCZ1 complex to membranes enriched in phosphatidylinositol 3-phosphate (PtdIns[3]P) or other charged lipids, leading to recruitment of YPT7. The chain is GTP-binding protein YPT53 (YPT53) from Saccharomyces cerevisiae (strain ATCC 204508 / S288c) (Baker's yeast).